The following is a 423-amino-acid chain: Cytidylate cyclase (423 aa).

One can recognise a Guanylate cyclase domain in the interval 79-184; it reads CSLFVDISGS…LKIRIGIDFG (106 aa). Residue Phe-82 coordinates a ribonucleoside 5'-triphosphate. The Mn(2+) site is built by Asp-84, Ile-85, and Asp-128. The tract at residues 290–409 is AGS-C domain; that stretch reads ENEQFYSPRD…ICHDSFGLFI (120 aa).

This sequence belongs to the adenylyl cyclase class-4/guanylyl cyclase family. Pyrimidine cyclase subfamily. In terms of assembly, homodimer. Mn(2+) is required as a cofactor.

It localises to the cytoplasm. It catalyses the reaction CTP = 3',5'-cyclic CMP + diphosphate. Its function is as follows. Pycsar (pyrimidine cyclase system for antiphage resistance) provides immunity against bacteriophage. The pyrimidine cyclase (PycC) synthesizes cyclic nucleotides in response to infection; these serve as specific second messenger signals. The signal activates the adjacent effector, leading to bacterial cell death and abortive phage infection. A clade E Pycsar system. The pyrimidine cyclase gene of a two-gene Pycsar system, weakly generates cyclic CMP (cCMP) from CTP, has little to no activity on ATP, GTP or UTP. Expression of this and adjacent effector SaPycTM (AC P0DV39) probably confers resistance to bacteriophage. The genes are probably only expressed in response to bacteriophage infection. The sequence is that of Cytidylate cyclase from Staphylococcus aureus.